We begin with the raw amino-acid sequence, 101 residues long: YcgL domain-containing protein ACIAD2309 (101 aa).

Positions 1–93 constitute a YcgL domain; it reads MHCDIYRSSK…PPEGFINPSD (93 aa).

This chain is YcgL domain-containing protein ACIAD2309, found in Acinetobacter baylyi (strain ATCC 33305 / BD413 / ADP1).